A 248-amino-acid polypeptide reads, in one-letter code: DNA polymerase sliding clamp (248 aa).

It belongs to the PCNA family. Homotrimer. The subunits circularize to form a toroid; DNA passes through its center. Replication factor C (RFC) is required to load the toroid on the DNA.

Its function is as follows. Sliding clamp subunit that acts as a moving platform for DNA processing. Responsible for tethering the catalytic subunit of DNA polymerase and other proteins to DNA during high-speed replication. The sequence is that of DNA polymerase sliding clamp from Nitrosopumilus maritimus (strain SCM1).